Here is a 329-residue protein sequence, read N- to C-terminus: Malate dehydrogenase (329 aa).

12-18 (GAAGQIG) is an NAD(+) binding site. Residues Arg95 and Arg101 each coordinate substrate. NAD(+) is bound by residues Asn108, Gln115, and 132-134 (VGN). Substrate contacts are provided by Asn134 and Arg165. Residue His190 is the Proton acceptor of the active site.

The protein belongs to the LDH/MDH superfamily. MDH type 2 family.

The catalysed reaction is (S)-malate + NAD(+) = oxaloacetate + NADH + H(+). Its function is as follows. Catalyzes the reversible oxidation of malate to oxaloacetate. This chain is Malate dehydrogenase, found in Bordetella petrii (strain ATCC BAA-461 / DSM 12804 / CCUG 43448).